The chain runs to 71 residues: Long neurotoxin 5 (71 aa).

Intrachain disulfides connect Cys-3–Cys-20, Cys-14–Cys-41, Cys-26–Cys-30, Cys-45–Cys-56, and Cys-57–Cys-62.

This sequence belongs to the three-finger toxin family. Long-chain subfamily. Type II alpha-neurotoxin sub-subfamily. Expressed by the venom gland.

Its subcellular location is the secreted. Binds with high affinity to muscular (alpha-1/CHRNA1) and neuronal (alpha-7/CHRNA7) nicotinic acetylcholine receptor (nAChR) and inhibits acetylcholine from binding to the receptor, thereby impairing neuromuscular and neuronal transmission. The polypeptide is Long neurotoxin 5 (Naja naja (Indian cobra)).